The sequence spans 614 residues: Vitamin B12 transporter BtuB (614 aa).

The first 20 residues, 1 to 20, serve as a signal peptide directing secretion; it reads MIKKASLLTACSVTAFSAWA. A TonB box motif is present at residues 26-33; the sequence is DTLVVTAN. Residues 38–152 enclose the TBDR plug domain; sequence PRSTVLAPTT…IGGVVNIITT (115 aa). Cyanocob(III)alamin is bound by residues Leu-83, Ser-85, Asn-92, and 110 to 111; that span reads GS. The TBDR beta-barrel domain occupies 155–614; the sequence is EPGTEISAGW…EYTLSGSYTF (460 aa). The next 3 beta stranded transmembrane spans lie at 158–165, 169–178, and 184–195; these read TEISAGWG, YQNYDVSTQQ, and TRVTLLGDYAHT. Ca(2+)-binding residues include Asp-199, Gln-211, Asp-213, and Asp-215. Transmembrane regions (beta stranded) follow at residues 217–227 and 232–248; these read FLSKTLYGALE and DAWS…NRTN. Ca(2+) is bound by residues Tyr-249 and Asp-250. Ala-251 provides a ligand contact to cyanocob(III)alamin. A Ca(2+)-binding site is contributed by Asp-261. Transmembrane regions (beta stranded) follow at residues 263 to 277, 279 to 296, 309 to 325, 328 to 337, 353 to 369, 371 to 381, 385 to 400, 403 to 417, 434 to 443, 449 to 458, 473 to 490, 494 to 509, 517 to 529, and 535 to 550; these read RKLY…LRYN, ELIK…KDYN, TLDE…NNII, HGNVGAGVDW, YDQR…QQVG, FTFEGAARSDD, FGRH…WEFI, YRFI…KAPN, KSKQWEGAFE, VNWRISGYRN, YYNE…TANF, PLTH…ARNA, RRAK…QLDW, and DWGI…YDKD. Thr-309 serves as a coordination point for cyanocob(III)alamin. Arg-517 is a cyanocob(III)alamin binding site. Tyr-551 contributes to the cyanocob(III)alamin binding site. A run of 3 beta stranded transmembrane segments spans residues 558-572, 585-596, and 602-614; these read TVKM…LAVA, IANLFDKDYETV, and AGRE…SYTF. Positions 597–614 match the TonB C-terminal box motif; the sequence is YGYQTAGREYTLSGSYTF.

The protein belongs to the TonB-dependent receptor family. BtuB (TC 1.B.14.3.1) subfamily.

It localises to the cell outer membrane. Its function is as follows. Involved in the active translocation of vitamin B12 (cyanocobalamin) across the outer membrane to the periplasmic space. It derives its energy for transport by interacting with the trans-periplasmic membrane protein TonB. The sequence is that of Vitamin B12 transporter BtuB from Escherichia coli O157:H7.